Consider the following 442-residue polypeptide: MAIIQLGSTCVAQWSIRPQFAVRAYYPSRIESTRHQNSSSQVNCLGASKSSMFSHGSLPFLSMTGMSRNMHPPRRGSRFTVRADADYYSVLGVSKNATKAEIKSAYRKLARNYHPDVNKDPGAEEKFKEISNAYEVLSDDEKKSLYDRYGEAGLKGAAGFGNGDFSNPFDLFDSLFEGFGGGMGRGSRSRAVDGQDEYYTLILNFKEAVFGMEKEIEISRLESCGTCEGSGAKPGTKPTKCTTCGGQGQVVSAARTPLGVFQQVMTCSSCNGTGEISTPCGTCSGDGRVRKTKRISLKVPAGVDSGSRLRVRGEGNAGKRGGSPGDLFVVIEVIPDPILKRDDTNILYTCKISYIDAILGTTLKVPTVDGTVDLKVPAGTQPSTTLVMAKKGVPVLNKSNMRGDQLVRVQVEIPKRLSKEEKKLIEELADMSKNKTANSTSR.

Residues M1–R82 constitute a chloroplast transit peptide. In terms of domain architecture, J spans D86–G150. The segment at G211–T292 adopts a CR-type zinc-finger fold. The Zn(2+) site is built by C224, C227, C241, C244, C267, C270, C280, and C283. CXXCXGXG motif repeat units lie at residues C224 to G231, C241 to G248, C267 to G274, and C280 to G287.

This sequence belongs to the DnaJ family.

The protein localises to the plastid. The protein resides in the chloroplast. May function together with HSC70 chaperone to assist protein folding and prevent protein aggregation during heat stress in the chloroplast. The sequence is that of Chaperone protein dnaJ A6, chloroplastic from Arabidopsis thaliana (Mouse-ear cress).